Consider the following 347-residue polypeptide: UDP-3-O-acylglucosamine N-acyltransferase (347 aa).

The active-site Proton acceptor is His241.

This sequence belongs to the transferase hexapeptide repeat family. LpxD subfamily. Homotrimer.

The catalysed reaction is a UDP-3-O-[(3R)-3-hydroxyacyl]-alpha-D-glucosamine + a (3R)-hydroxyacyl-[ACP] = a UDP-2-N,3-O-bis[(3R)-3-hydroxyacyl]-alpha-D-glucosamine + holo-[ACP] + H(+). It functions in the pathway bacterial outer membrane biogenesis; LPS lipid A biosynthesis. Its function is as follows. Catalyzes the N-acylation of UDP-3-O-acylglucosamine using 3-hydroxyacyl-ACP as the acyl donor. Is involved in the biosynthesis of lipid A, a phosphorylated glycolipid that anchors the lipopolysaccharide to the outer membrane of the cell. The polypeptide is UDP-3-O-acylglucosamine N-acyltransferase (Neisseria meningitidis serogroup A / serotype 4A (strain DSM 15465 / Z2491)).